A 952-amino-acid polypeptide reads, in one-letter code: Lysosomal alpha-glucosidase (952 aa).

Positions 1-27 are cleaved as a signal peptide; that stretch reads MGVRHPPCSHRLLAVCALVSLATAALL. A propeptide spanning residues 28 to 69 is cleaved from the precursor; sequence GHILLHDFLLVPRELSGSSPVLEETHPAHQQGASRPGPRDAQ. The disordered stretch occupies residues 47–82; sequence PVLEETHPAHQQGASRPGPRDAQAHPGRPRAVPTQC. A P-type domain is found at 80-131; sequence TQCDVPPNSRFDCAPDKAITQEQCEARGCCYIPAKQGLQGAQMGQPWCFFPP. 3 cysteine pairs are disulfide-bonded: Cys82/Cys109, Cys92/Cys108, and Cys103/Cys127. N-linked (GlcNAc...) asparagine glycosylation is found at Asn140, Asn233, and Asn390. Asp404 is a substrate binding site. Residue Asn470 is glycosylated (N-linked (GlcNAc...) asparagine). Catalysis depends on Asp518, which acts as the Nucleophile. Glu521 is an active-site residue. A disulfide bridge connects residues Cys533 and Cys558. Arg600 and Asp616 together coordinate substrate. The cysteines at positions 647 and 658 are disulfide-linked. N-linked (GlcNAc...) asparagine glycosylation occurs at Asn652. His674 serves as a coordination point for substrate. 2 N-linked (GlcNAc...) asparagine glycosylation sites follow: Asn882 and Asn925.

Belongs to the glycosyl hydrolase 31 family. The different forms of acid glucosidase are obtained by proteolytic processing. Post-translationally, phosphorylation of mannose residues ensures efficient transport of the enzyme to the lysosomes via the mannose 6-phosphate receptor.

The protein resides in the lysosome. It localises to the lysosome membrane. It carries out the reaction Hydrolysis of terminal, non-reducing (1-&gt;4)-linked alpha-D-glucose residues with release of alpha-D-glucose.. Functionally, essential for the degradation of glycogen in lysosomes. Has highest activity on alpha-1,4-linked glycosidic linkages, but can also hydrolyze alpha-1,6-linked glucans. The sequence is that of Lysosomal alpha-glucosidase (GAA) from Homo sapiens (Human).